The primary structure comprises 846 residues: Enhancer of polycomb-like protein 1 (846 aa).

5 disordered regions span residues 169-204 (FNSKAEGSSGDVKSDKEQGRGMRVKGKDREKEKGDA), 391-466 (TSDE…APDA), 587-607 (EKKRPRSIDEVEEEMQEQSPK), 682-702 (AADAKPPPAPIFQKPPAPQPN), and 759-804 (QVQA…GVKQ). Positions 180–203 (VKSDKEQGRGMRVKGKDREKEKGD) are enriched in basic and acidic residues. A compositionally biased stretch (polar residues) spans 411 to 426 (PSLSGQTPLTSGQSSS). A compositionally biased stretch (basic and acidic residues) spans 432-452 (TDKDREERAQRERYDAQRNAE). Residues 434–490 (KDREERAQRERYDAQRNAERSGILSGRSNAPDALKERLQALQQKTEEMLARKKEQDA) adopt a coiled-coil conformation. The segment covering 686–702 (KPPPAPIFQKPPAPQPN) has biased composition (pro residues). The segment covering 759 to 773 (QVQAQGQGHPQAHLQ) has biased composition (low complexity). Over residues 783–796 (NGVNSPMPNGQQML) the composition is skewed to polar residues.

It belongs to the enhancer of polycomb family. Component of the NuA4 histone acetyltransferase complex.

It is found in the nucleus. Its function is as follows. Component of the NuA4 histone acetyltransferase complex which is involved in transcriptional activation of selected genes principally by acetylation of nucleosomal histone H4 and H2A. The NuA4 complex is also involved in DNA repair. Involved in gene silencing by neighboring heterochromatin, blockage of the silencing spreading along the chromosome, and required for cell cycle progression through G2/M. This chain is Enhancer of polycomb-like protein 1 (EPL1), found in Cryptococcus neoformans var. neoformans serotype D (strain JEC21 / ATCC MYA-565) (Filobasidiella neoformans).